Reading from the N-terminus, the 552-residue chain is Probable acyl-activating enzyme 5, peroxisomal (552 aa).

Residues 550–552 (SRM) carry the Microbody targeting signal motif.

This sequence belongs to the ATP-dependent AMP-binding enzyme family. Expressed in roots, stems and developing seeds.

It localises to the peroxisome. In terms of biological role, may act as an acid--thiol ligase that activates carboxylic acids by forming acyl-CoAs. This Arabidopsis thaliana (Mouse-ear cress) protein is Probable acyl-activating enzyme 5, peroxisomal (AAE5).